The sequence spans 316 residues: 4-hydroxy-3-methylbut-2-enyl diphosphate reductase (316 aa).

Position 12 (C12) interacts with [4Fe-4S] cluster. Residues H41 and H74 each coordinate (2E)-4-hydroxy-3-methylbut-2-enyl diphosphate. The dimethylallyl diphosphate site is built by H41 and H74. Isopentenyl diphosphate contacts are provided by H41 and H74. C96 contributes to the [4Fe-4S] cluster binding site. H124 lines the (2E)-4-hydroxy-3-methylbut-2-enyl diphosphate pocket. Position 124 (H124) interacts with dimethylallyl diphosphate. H124 is a binding site for isopentenyl diphosphate. The active-site Proton donor is E126. T167 is a binding site for (2E)-4-hydroxy-3-methylbut-2-enyl diphosphate. C197 contributes to the [4Fe-4S] cluster binding site. Residues S225, S226, N227, and S269 each coordinate (2E)-4-hydroxy-3-methylbut-2-enyl diphosphate. 4 residues coordinate dimethylallyl diphosphate: S225, S226, N227, and S269. 4 residues coordinate isopentenyl diphosphate: S225, S226, N227, and S269.

Belongs to the IspH family. As to quaternary structure, homodimer. [4Fe-4S] cluster is required as a cofactor.

The catalysed reaction is isopentenyl diphosphate + 2 oxidized [2Fe-2S]-[ferredoxin] + H2O = (2E)-4-hydroxy-3-methylbut-2-enyl diphosphate + 2 reduced [2Fe-2S]-[ferredoxin] + 2 H(+). It carries out the reaction dimethylallyl diphosphate + 2 oxidized [2Fe-2S]-[ferredoxin] + H2O = (2E)-4-hydroxy-3-methylbut-2-enyl diphosphate + 2 reduced [2Fe-2S]-[ferredoxin] + 2 H(+). It functions in the pathway isoprenoid biosynthesis; dimethylallyl diphosphate biosynthesis; dimethylallyl diphosphate from (2E)-4-hydroxy-3-methylbutenyl diphosphate: step 1/1. It participates in isoprenoid biosynthesis; isopentenyl diphosphate biosynthesis via DXP pathway; isopentenyl diphosphate from 1-deoxy-D-xylulose 5-phosphate: step 6/6. Its function is as follows. Catalyzes the conversion of 1-hydroxy-2-methyl-2-(E)-butenyl 4-diphosphate (HMBPP) into a mixture of isopentenyl diphosphate (IPP) and dimethylallyl diphosphate (DMAPP). Acts in the terminal step of the DOXP/MEP pathway for isoprenoid precursor biosynthesis. In Salmonella agona (strain SL483), this protein is 4-hydroxy-3-methylbut-2-enyl diphosphate reductase.